The following is a 359-amino-acid chain: Cytokine receptor-like factor 2 (359 aa).

An N-terminal signal peptide occupies residues 1 to 19 (MAWALAVILLPRLLAAAAA). Over 20 to 232 (AAAVTSRGDV…PAPSPALAPP (213 aa)) the chain is Extracellular. A glycan (N-linked (GlcNAc...) asparagine) is linked at asparagine 53. Residues cysteine 68 and cysteine 82 are joined by a disulfide bond. The Fibronectin type-III domain maps to 119–213 (PPWNVTLLWT…WTAVTRLSGA (95 aa)). Asparagine 122 carries an N-linked (GlcNAc...) asparagine glycan. 2 cysteine pairs are disulfide-bonded: cysteine 168-cysteine 169 and cysteine 181-cysteine 219. The WSXWS motif signature appears at 201–205 (PSEWT). A helical transmembrane segment spans residues 233–253 (LLPLGCGLAALLTLSLLLAAL). The Cytoplasmic portion of the chain corresponds to 254–359 (RLRRVKDALL…MVGDSGYMTL (106 aa)). The short motif at 262 to 270 (LLPCVPDPS) is the Box 1 motif element. The segment at 312–336 (KRVEPEDGTSLCTVPRPPSFEPRGP) is disordered.

It belongs to the type I cytokine receptor family. Type 5 subfamily. As to quaternary structure, the TSLP receptor is a heterodimer of CRLF2 and IL7R. Binding of TSLP to CRLF2/TSLPR is a mechanistic prerequisite for recruitment of IL7R to the high-affinity ternary complex. High level of expression in liver, lung and testis. Also expressed in heart, brain, spleen, thymus and bone marrow. Highly expressed in progenitors and myeloid cells. Isoform 2 is expressed in primary hemotopoietic cells.

It localises to the cell membrane. It is found in the secreted. Receptor for thymic stromal lymphopoietin (TSLP). Forms a functional complex with TSLP and IL7R which is capable of stimulating cell proliferation through activation of STAT3 and STAT5. Also activates JAK2. Implicated in the development of the hematopoietic system. This Mus musculus (Mouse) protein is Cytokine receptor-like factor 2 (Crlf2).